Consider the following 387-residue polypeptide: Ferrochelatase (387 aa).

The interval 1-318 is ferrochelatase; that stretch reads MGRVGVLLLN…VFIDALAQMV (318 aa). Positions 196 and 277 each coordinate Fe cation. Residues 319–387 form a hlip domain region; that stretch reads MDSLNDPPCT…QGPLHFVGLL (69 aa).

In the N-terminal section; belongs to the ferrochelatase family. This sequence in the C-terminal section; belongs to the Hlip family.

The protein localises to the cytoplasm. The catalysed reaction is heme b + 2 H(+) = protoporphyrin IX + Fe(2+). It functions in the pathway porphyrin-containing compound metabolism; protoheme biosynthesis; protoheme from protoporphyrin-IX: step 1/1. Catalyzes the ferrous insertion into protoporphyrin IX. In terms of biological role, the Hlip proteins might regulate tetrapyrrole biosynthesis, maybe at the level of aminolevulinic acid synthesis. Deletion of 4 to 5 members of the Hlip family (always including this member) suggests the proteins are involved in regulation of chlorophyll biosynthesis, in stabilization of chlorophyll-binding proteins and/or in reuse of chlorophylls, and may regulate tetrapyrrole biosynthesis. The Hlip proteins probably stabilize PSII assembly intermediates. This is Ferrochelatase from Synechocystis sp. (strain ATCC 27184 / PCC 6803 / Kazusa).